Here is an 889-residue protein sequence, read N- to C-terminus: Chromatin structure-remodeling complex subunit RSC2 (889 aa).

Residues 12-120 (QNSSALYKDL…KYLKDTIYPN (109 aa)) enclose the Bromo 1 domain. Positions 151–268 (EKAEEVARAN…QVSRTQVKRG (118 aa)) are disordered. Residues 158-174 (RANAARAESSSSMNSTE) show a composition bias toward low complexity. Positions 197–209 (NNDEDYEATDMDI) are enriched in acidic residues. Over residues 210–222 (DNPKDADFPDLIR) the composition is skewed to basic and acidic residues. The segment covering 241 to 250 (STTPSHSGTP) has biased composition (polar residues). Positions 255-268 (PRHRQVSRTQVKRG) are enriched in basic residues. Positions 280–382 (RMKNVMKVLK…KTFTSLARFE (103 aa)) constitute a Bromo 2 domain. The 119-residue stretch at 408–526 (ISYHVGDWAL…ESDKIFNKIR (119 aa)) folds into the BAH domain. The disordered stretch occupies residues 601 to 624 (GEYATSDDCPRYIIRPNDSPEEGQ). Position 612 is a phosphotyrosine (Tyr612). The residue at position 682 (Ser682) is a Phosphoserine. Positions 831–865 (EVEETMEDVTGKDKDDDGLEPDVENEKESLPGPFV) are disordered.

The protein belongs to the RSC1 family. Component of the two forms of the RSC complex composed of at least either RSC1 or RSC2, and ARP7, ARP9, LDB7, NPL6, RSC3, RSC30, RSC4, RSC58, RSC6, RSC8, RSC9, SFH1, STH1, HTL1 and probably RTT102. The complexes interact with histone and histone variant components of centromeric chromatin.

The protein localises to the nucleus. Its function is as follows. Component of the chromatin structure remodeling complex (RSC), which is involved in transcription regulation and nucleosome positioning. RSC is responsible for the transfer of a histone octamer from a nucleosome core particle to naked DNA. The reaction requires ATP and involves an activated RSC-nucleosome intermediate. Remodeling reaction also involves DNA translocation, DNA twist and conformational change. As a reconfigurer of centromeric and flanking nucleosomes, RSC complex is required both for proper kinetochore function in chromosome segregation and, via a PKC1-dependent signaling pathway, for organization of the cellular cytoskeleton. This subunit is involved in meiotic sporulation through regulating IME2 expression, and is also essential for 2-micron plasmid maintenance and for normal REP1 protein localization. This is Chromatin structure-remodeling complex subunit RSC2 (RSC2) from Saccharomyces cerevisiae (strain ATCC 204508 / S288c) (Baker's yeast).